Reading from the N-terminus, the 655-residue chain is Threonine--tRNA ligase (655 aa).

One can recognise a TGS domain in the interval 1 to 66; sequence MIDLVFPDGS…TGERKFEILT (66 aa). Residues 248-540 form a catalytic region; the sequence is DHRKLGKTMD…LLENFAGALP (293 aa). Residues Cys-340, His-391, and His-517 each contribute to the Zn(2+) site.

It belongs to the class-II aminoacyl-tRNA synthetase family. Homodimer. Requires Zn(2+) as cofactor.

It is found in the cytoplasm. It carries out the reaction tRNA(Thr) + L-threonine + ATP = L-threonyl-tRNA(Thr) + AMP + diphosphate + H(+). In terms of biological role, catalyzes the attachment of threonine to tRNA(Thr) in a two-step reaction: L-threonine is first activated by ATP to form Thr-AMP and then transferred to the acceptor end of tRNA(Thr). Also edits incorrectly charged L-seryl-tRNA(Thr). The polypeptide is Threonine--tRNA ligase (Caulobacter vibrioides (strain ATCC 19089 / CIP 103742 / CB 15) (Caulobacter crescentus)).